Consider the following 405-residue polypeptide: Bone morphogenetic protein 4 (405 aa).

The signal sequence occupies residues 1-19; sequence MIPGNRMLMVILLCQVLLG. Residues 20–291 constitute a propeptide that is removed on maturation; the sequence is GTNHASLIPE…GHALTRRARR (272 aa). N-linked (GlcNAc...) asparagine glycans are attached at residues N144, N208, N347, and N362. Cystine bridges form between C305-C370, C334-C402, and C338-C404.

Belongs to the TGF-beta family. In terms of assembly, homodimer; disulfide-linked. Part of a complex consisting of TWSG1 and CHRD. Forms a ternary complex with chordin/CHRD and TSKU.

It localises to the secreted. Its function is as follows. Negatively regulates the structure and function of the limb apical ectodermal ridge. This Gallus gallus (Chicken) protein is Bone morphogenetic protein 4 (BMP4).